The primary structure comprises 54 residues: Relaxin (54 aa).

Glutamine 1 bears the Pyrrolidone carboxylic acid mark. 3 disulfides stabilise this stretch: cysteine 10-cysteine 41, cysteine 22-cysteine 54, and cysteine 40-cysteine 45.

The protein belongs to the insulin family. In terms of assembly, heterodimer of a B chain and an A chain linked by two disulfide bonds.

It localises to the secreted. Relaxin is an ovarian hormone that acts with estrogen to produce dilatation of the birth canal in many mammals. The polypeptide is Relaxin (Balaenoptera acutorostrata (Common minke whale)).